Here is a 346-residue protein sequence, read N- to C-terminus: Dihydroorotase (346 aa).

Positions 13 and 15 each coordinate Zn(2+). Residues His15–Arg17 and Asn41 contribute to the substrate site. Residues Lys99, His136, and His174 each contribute to the Zn(2+) site. Lys99 carries the post-translational modification N6-carboxylysine. His136 provides a ligand contact to substrate. Leu219 serves as a coordination point for substrate. Residue Asp247 participates in Zn(2+) binding. Residue Asp247 is part of the active site. The substrate site is built by His251 and Ala263.

Belongs to the metallo-dependent hydrolases superfamily. DHOase family. Class II DHOase subfamily. In terms of assembly, homodimer. Requires Zn(2+) as cofactor.

The enzyme catalyses (S)-dihydroorotate + H2O = N-carbamoyl-L-aspartate + H(+). The protein operates within pyrimidine metabolism; UMP biosynthesis via de novo pathway; (S)-dihydroorotate from bicarbonate: step 3/3. Catalyzes the reversible cyclization of carbamoyl aspartate to dihydroorotate. The protein is Dihydroorotase of Picosynechococcus sp. (strain ATCC 27264 / PCC 7002 / PR-6) (Agmenellum quadruplicatum).